Consider the following 240-residue polypeptide: Ribonuclease HII (240 aa).

One can recognise an RNase H type-2 domain in the interval 27 to 226; that stretch reads GPVAGVDEAG…GETRSLRLED (200 aa). 3 residues coordinate a divalent metal cation: Asp-33, Glu-34, and Asp-127.

Belongs to the RNase HII family. The cofactor is Mn(2+). Mg(2+) is required as a cofactor.

It localises to the cytoplasm. The catalysed reaction is Endonucleolytic cleavage to 5'-phosphomonoester.. In terms of biological role, endonuclease that specifically degrades the RNA of RNA-DNA hybrids. The chain is Ribonuclease HII from Parafrankia sp. (strain EAN1pec).